A 117-amino-acid polypeptide reads, in one-letter code: Ribonuclease P protein component (117 aa).

Belongs to the RnpA family. Consists of a catalytic RNA component (M1 or rnpB) and a protein subunit.

It carries out the reaction Endonucleolytic cleavage of RNA, removing 5'-extranucleotides from tRNA precursor.. Its function is as follows. RNaseP catalyzes the removal of the 5'-leader sequence from pre-tRNA to produce the mature 5'-terminus. It can also cleave other RNA substrates such as 4.5S RNA. The protein component plays an auxiliary but essential role in vivo by binding to the 5'-leader sequence and broadening the substrate specificity of the ribozyme. The chain is Ribonuclease P protein component from Desulforapulum autotrophicum (strain ATCC 43914 / DSM 3382 / VKM B-1955 / HRM2) (Desulfobacterium autotrophicum).